The chain runs to 113 residues: Large ribosomal subunit protein uL24 (113 aa).

The protein belongs to the universal ribosomal protein uL24 family. As to quaternary structure, part of the 50S ribosomal subunit.

One of two assembly initiator proteins, it binds directly to the 5'-end of the 23S rRNA, where it nucleates assembly of the 50S subunit. Its function is as follows. One of the proteins that surrounds the polypeptide exit tunnel on the outside of the subunit. The protein is Large ribosomal subunit protein uL24 of Rickettsia typhi (strain ATCC VR-144 / Wilmington).